A 415-amino-acid chain; its full sequence is Histidine--tRNA ligase (415 aa).

Belongs to the class-II aminoacyl-tRNA synthetase family. In terms of assembly, homodimer.

Its subcellular location is the cytoplasm. It catalyses the reaction tRNA(His) + L-histidine + ATP = L-histidyl-tRNA(His) + AMP + diphosphate + H(+). The chain is Histidine--tRNA ligase from Clostridium botulinum (strain Okra / Type B1).